A 303-amino-acid chain; its full sequence is GTPase Era (303 aa).

An Era-type G domain is found at 9 to 176; the sequence is KSGFVSIIGR…VEQIVEHMEE (168 aa). Positions 17–24 are G1; it reads GRPNVGKS. Position 17 to 24 (17 to 24) interacts with GTP; that stretch reads GRPNVGKS. The tract at residues 43–47 is G2; that stretch reads QTTRN. Residues 64-67 form a G3 region; it reads DTPG. GTP contacts are provided by residues 64 to 68 and 126 to 129; these read DTPGI and NKID. A G4 region spans residues 126–129; the sequence is NKID. A G5 region spans residues 155-157; the sequence is ISA. Positions 199–284 constitute a KH type-2 domain; it reads IREKVLHLTK…YLELWVKVQK (86 aa).

This sequence belongs to the TRAFAC class TrmE-Era-EngA-EngB-Septin-like GTPase superfamily. Era GTPase family. In terms of assembly, monomer.

The protein localises to the cytoplasm. Its subcellular location is the cell membrane. An essential GTPase that binds both GDP and GTP, with rapid nucleotide exchange. Plays a role in 16S rRNA processing and 30S ribosomal subunit biogenesis and possibly also in cell cycle regulation and energy metabolism. The sequence is that of GTPase Era from Shouchella clausii (strain KSM-K16) (Alkalihalobacillus clausii).